Consider the following 852-residue polypeptide: Nucleolar protein 14 homolog (852 aa).

Residues 1–40 (MVAKGKKASADAVYAKKTTRSANPFDNSTAQSSKRGNPFD) form a disordered region. Residues 20 to 35 (RSANPFDNSTAQSSKR) show a composition bias toward polar residues. Residues 190–221 (IDEMIVEQKRRKNEIAKEKDEVYDLTEKLDAN) adopt a coiled-coil conformation. 2 disordered regions span residues 288–324 (RRMR…GEDD) and 338–410 (LGTH…KSAD). Over residues 344-353 (GKKEAVLKGD) the composition is skewed to basic and acidic residues. The segment covering 354–381 (ENEDDDDKEGEEEEEEDSDEESDSEVDN) has biased composition (acidic residues). Residues 774–851 (KMSKAKEERA…ELSRAKKKKK (78 aa)) are a coiled coil.

The protein belongs to the NOP14 family. Component of the ribosomal small subunit (SSU) processome.

Its subcellular location is the nucleus. It localises to the nucleolus. Functionally, involved in nucleolar processing of pre-18S ribosomal RNA. Has a role in the nuclear export of 40S pre-ribosomal subunit to the cytoplasm. This is Nucleolar protein 14 homolog (l(3)07882) from Drosophila melanogaster (Fruit fly).